Consider the following 347-residue polypeptide: NADH-ubiquinone oxidoreductase chain 2 (347 aa).

11 helical membrane passes run 1–21, 25–45, 59–79, 96–116, 127–147, 149–169, 178–198, 200–220, 247–267, 276–296, and 325–345; these read MNPL…AIVM, HWLT…PMLM, YFLT…MNLT, IIMT…FWVP, CLIL…MISP, INLN…GWGG, IMAY…AYNP, MTML…MLLI, IMLS…WMII, IIMP…YMRL, and LLSP…MMSL.

Belongs to the complex I subunit 2 family. Core subunit of respiratory chain NADH dehydrogenase (Complex I) which is composed of 45 different subunits. Interacts with TMEM242.

The protein localises to the mitochondrion inner membrane. It catalyses the reaction a ubiquinone + NADH + 5 H(+)(in) = a ubiquinol + NAD(+) + 4 H(+)(out). Core subunit of the mitochondrial membrane respiratory chain NADH dehydrogenase (Complex I) which catalyzes electron transfer from NADH through the respiratory chain, using ubiquinone as an electron acceptor. Essential for the catalytic activity and assembly of complex I. The chain is NADH-ubiquinone oxidoreductase chain 2 from Natalus stramineus (Mexican funnel-eared bat).